Consider the following 658-residue polypeptide: UvrABC system protein B (658 aa).

Positions 25 to 178 constitute a Helicase ATP-binding domain; that stretch reads KSLKNNNHYQ…KNFLLKLVEM (154 aa). Position 38 to 45 (38 to 45) interacts with ATP; sequence GVTGSGKT. Residues 91 to 114 carry the Beta-hairpin motif; the sequence is HFDYYQPESYIPRRDLFIEKDSSI. Positions 433–607 constitute a Helicase C-terminal domain; sequence QVQDLFDEIK…ELKLRDDEIR (175 aa). Positions 623-658 constitute a UVR domain; sequence EKIIKELDKKMRECAKNLDFEEAMRLRDEIAKLRTL.

Belongs to the UvrB family. In terms of assembly, forms a heterotetramer with UvrA during the search for lesions. Interacts with UvrC in an incision complex.

It localises to the cytoplasm. In terms of biological role, the UvrABC repair system catalyzes the recognition and processing of DNA lesions. A damage recognition complex composed of 2 UvrA and 2 UvrB subunits scans DNA for abnormalities. Upon binding of the UvrA(2)B(2) complex to a putative damaged site, the DNA wraps around one UvrB monomer. DNA wrap is dependent on ATP binding by UvrB and probably causes local melting of the DNA helix, facilitating insertion of UvrB beta-hairpin between the DNA strands. Then UvrB probes one DNA strand for the presence of a lesion. If a lesion is found the UvrA subunits dissociate and the UvrB-DNA preincision complex is formed. This complex is subsequently bound by UvrC and the second UvrB is released. If no lesion is found, the DNA wraps around the other UvrB subunit that will check the other stand for damage. The polypeptide is UvrABC system protein B (Helicobacter pylori (strain HPAG1)).